We begin with the raw amino-acid sequence, 215 residues long: Cytochrome b6 (215 aa).

Residues 32–52 traverse the membrane as a helical segment; it reads IFYCLGGITFTCFLVQVATGF. C35 is a binding site for heme c. Heme b-binding residues include H86 and H100. 3 helical membrane passes run 90 to 110, 116 to 136, and 186 to 206; these read ASMM…TGGF, STWI…VTGY, and LHTF…FLMI. 2 residues coordinate heme b: H187 and H202.

Belongs to the cytochrome b family. PetB subfamily. As to quaternary structure, the 4 large subunits of the cytochrome b6-f complex are cytochrome b6, subunit IV (17 kDa polypeptide, PetD), cytochrome f and the Rieske protein, while the 4 small subunits are PetG, PetL, PetM and PetN. The complex functions as a dimer. Heme b serves as cofactor. It depends on heme c as a cofactor.

The protein localises to the plastid. Its subcellular location is the chloroplast thylakoid membrane. Its function is as follows. Component of the cytochrome b6-f complex, which mediates electron transfer between photosystem II (PSII) and photosystem I (PSI), cyclic electron flow around PSI, and state transitions. The chain is Cytochrome b6 from Tetradesmus obliquus (Green alga).